The chain runs to 512 residues: Inositol-3-phosphate synthase (512 aa).

Gly-72, Gly-73, Asn-74, Asn-75, Asp-145, Ile-182, Gln-192, Arg-195, Thr-232, Gly-233, Asn-234, Thr-235, Gly-283, Ser-284, Asp-308, Ser-311, Asn-342, Asn-343, Asp-344, Lys-357, Gly-395, Asp-396, Asp-424, and Ser-425 together coordinate NAD(+).

Belongs to the myo-inositol 1-phosphate synthase family. The cofactor is NAD(+).

It localises to the cytoplasm. Its subcellular location is the cytosol. The protein resides in the nucleus. The enzyme catalyses D-glucose 6-phosphate = 1D-myo-inositol 3-phosphate. It participates in polyol metabolism; myo-inositol biosynthesis; myo-inositol from D-glucose 6-phosphate: step 1/2. Key enzyme in myo-inositol biosynthesis pathway that catalyzes the conversion of glucose 6-phosphate to 1-myo-inositol 1-phosphate in a NAD-dependent manner. This Mesembryanthemum crystallinum (Common ice plant) protein is Inositol-3-phosphate synthase.